Reading from the N-terminus, the 319-residue chain is Probable deoxyhypusine synthase (319 aa).

The Nucleophile role is filled by Lys287.

The protein belongs to the deoxyhypusine synthase family. NAD(+) serves as cofactor.

It carries out the reaction [eIF5A protein]-L-lysine + spermidine = [eIF5A protein]-deoxyhypusine + propane-1,3-diamine. Its pathway is protein modification; eIF5A hypusination. Functionally, catalyzes the NAD-dependent oxidative cleavage of spermidine and the subsequent transfer of the butylamine moiety of spermidine to the epsilon-amino group of a specific lysine residue of the eIF-5A precursor protein to form the intermediate deoxyhypusine residue. The sequence is that of Probable deoxyhypusine synthase from Ignicoccus hospitalis (strain KIN4/I / DSM 18386 / JCM 14125).